We begin with the raw amino-acid sequence, 352 residues long: tRNA pseudouridine synthase D (352 aa).

The active-site Nucleophile is Asp81. The TRUD domain occupies 157 to 303; sequence GVPNYFGLQR…MLHERRILRL (147 aa).

This sequence belongs to the pseudouridine synthase TruD family.

It catalyses the reaction uridine(13) in tRNA = pseudouridine(13) in tRNA. Its function is as follows. Responsible for synthesis of pseudouridine from uracil-13 in transfer RNAs. This chain is tRNA pseudouridine synthase D, found in Azotobacter vinelandii (strain DJ / ATCC BAA-1303).